The primary structure comprises 161 residues: Kininogen-2 (161 aa).

Residues 1–23 (MRLWFCLSFFVVLCLEHFPGTLA) form the signal peptide. An intrachain disulfide couples cysteine 150 to cysteine 156. Valine 160 bears the Valine amide mark.

Belongs to the bradykinin-related peptide family. In terms of tissue distribution, expressed by the skin glands.

It is found in the secreted. In terms of biological role, inhibits ACE with a Ki of 1.6 uM, and targets B2 bradykinin receptor (BDKRB2). Provokes contraction of smooth muscle preparation (ileum). In vivo, induces an early hyperalgesic effects in living rats after intraplantar injection. Its function is as follows. Inhibits the bradykinin-induced in vitro relaxation of rat arterial smooth muscle and constriction of intestinal smooth muscle. May target bradykinin receptors (BDKRB). This chain is Kininogen-2, found in Bombina orientalis (Oriental fire-bellied toad).